The following is a 471-amino-acid chain: Glutamate--tRNA ligase (471 aa).

The short motif at 9–19 (PSPTGYLHVGG) is the 'HIGH' region element. Zn(2+)-binding residues include Cys98, Cys100, Cys125, and His127. A 'KMSKS' region motif is present at residues 237 to 241 (KLSKR). Residue Lys240 coordinates ATP.

It belongs to the class-I aminoacyl-tRNA synthetase family. Glutamate--tRNA ligase type 1 subfamily. As to quaternary structure, monomer. The cofactor is Zn(2+).

Its subcellular location is the cytoplasm. It catalyses the reaction tRNA(Glu) + L-glutamate + ATP = L-glutamyl-tRNA(Glu) + AMP + diphosphate. In terms of biological role, catalyzes the attachment of glutamate to tRNA(Glu) in a two-step reaction: glutamate is first activated by ATP to form Glu-AMP and then transferred to the acceptor end of tRNA(Glu). The chain is Glutamate--tRNA ligase from Salmonella schwarzengrund (strain CVM19633).